The chain runs to 141 residues: ATP synthase F(0) complex subunit C3, mitochondrial (141 aa).

A mitochondrion-targeting transit peptide spans 1-66 (MFACAKLACT…REFQTTAVNR (66 aa)). A helical transmembrane segment spans residues 82–102 (VGVAGSGAGIGTVFGSLIIGY). Lysine 109 is modified (N6,N6,N6-trimethyllysine). A helical membrane pass occupies residues 117–137 (ILGFALSEAMGLFCLMVAFLI).

Belongs to the ATPase C chain family. In terms of assembly, F-type ATPases have 2 components, CF(1) - the catalytic core - and CF(0) - the membrane proton channel. CF(1) has five subunits: alpha(3), beta(3), gamma(1), delta(1), epsilon(1). CF(0) has three main subunits: a, b and c. Interacts with TMEM70 and TMEM242. In terms of processing, trimethylated by ATPSCKMT at Lys-109. Methylation is required for proper incorporation of the C subunit into the ATP synthase complex and mitochondrial respiration.

It is found in the mitochondrion membrane. Functionally, mitochondrial membrane ATP synthase (F(1)F(0) ATP synthase or Complex V) produces ATP from ADP in the presence of a proton gradient across the membrane which is generated by electron transport complexes of the respiratory chain. F-type ATPases consist of two structural domains, F(1) - containing the extramembraneous catalytic core and F(0) - containing the membrane proton channel, linked together by a central stalk and a peripheral stalk. During catalysis, ATP synthesis in the catalytic domain of F(1) is coupled via a rotary mechanism of the central stalk subunits to proton translocation. Part of the complex F(0) domain. A homomeric c-ring of probably 10 subunits is part of the complex rotary element. In Bos taurus (Bovine), this protein is ATP synthase F(0) complex subunit C3, mitochondrial.